A 222-amino-acid polypeptide reads, in one-letter code: Ribosomal RNA small subunit methyltransferase G (222 aa).

S-adenosyl-L-methionine contacts are provided by G80, L85, and R149.

This sequence belongs to the methyltransferase superfamily. RNA methyltransferase RsmG family.

It localises to the cytoplasm. Its function is as follows. Specifically methylates the N7 position of a guanine in 16S rRNA. In Treponema pallidum (strain Nichols), this protein is Ribosomal RNA small subunit methyltransferase G.